The chain runs to 160 residues: uncharacterized protein (160 aa).

This is an uncharacterized protein from Magallana gigas (Pacific oyster).